Consider the following 372-residue polypeptide: GTPase Obg (372 aa).

Residues 1–159 (MKFVDEATIE…RRLRLELKVL (159 aa)) enclose the Obg domain. In terms of domain architecture, OBG-type G spans 160-336 (ADVGLLGLPN…LIWALQDYLD (177 aa)). GTP-binding positions include 166–173 (GLPNAGKS), 191–195 (FTTLH), 213–216 (DIPG), 288–291 (NKLD), and 317–319 (SGL). Serine 173 and threonine 193 together coordinate Mg(2+). Residues 341-372 (KEQITQDKADGSYVHEDPRFDTTRDAPPSGKD) are disordered.

This sequence belongs to the TRAFAC class OBG-HflX-like GTPase superfamily. OBG GTPase family. As to quaternary structure, monomer. Requires Mg(2+) as cofactor.

Its subcellular location is the cytoplasm. In terms of biological role, an essential GTPase which binds GTP, GDP and possibly (p)ppGpp with moderate affinity, with high nucleotide exchange rates and a fairly low GTP hydrolysis rate. Plays a role in control of the cell cycle, stress response, ribosome biogenesis and in those bacteria that undergo differentiation, in morphogenesis control. The polypeptide is GTPase Obg (Bordetella avium (strain 197N)).